The following is a 589-amino-acid chain: uncharacterized protein (589 aa).

A run of 14 helical transmembrane segments spans residues 90–110 (YIVI…QTVI), 128–148 (SWIG…CGIM), 162–182 (IVLF…LWLV), 189–209 (GIGG…ITPL), 217–237 (GCMG…GGAI), 245–265 (WIFF…IFFL), 284–304 (FVGI…LNIG), 311–331 (AHAN…GFVV), 355–375 (VMVT…YIPI), 390–410 (VHTL…GMGI), 418–438 (YPMI…IAIY), 448–468 (GFLA…LIAI), 483–503 (AFML…AVIY), and 545–565 (IRTI…LSFF).

It belongs to the major facilitator superfamily. TCR/Tet family.

The protein localises to the membrane. This is an uncharacterized protein from Schizosaccharomyces pombe (strain 972 / ATCC 24843) (Fission yeast).